Consider the following 108-residue polypeptide: Biogenesis of lysosome-related organelles complex 1 subunit CNL1 (108 aa).

This sequence belongs to the BLOC1S4 family. In terms of assembly, component of the biogenesis of lysosome-related organelles complex-1 (BLOC-1).

The protein resides in the cytoplasm. In terms of biological role, component of the biogenesis of lysosome-related organelles complex-1 (BLOC-1), a complex that is involved in endosomal cargo sorting. This chain is Biogenesis of lysosome-related organelles complex 1 subunit CNL1 (CLN1), found in Zygosaccharomyces rouxii (strain ATCC 2623 / CBS 732 / NBRC 1130 / NCYC 568 / NRRL Y-229).